The sequence spans 229 residues: Large ribosomal subunit protein uL1 (229 aa).

It belongs to the universal ribosomal protein uL1 family. Part of the 50S ribosomal subunit.

Binds directly to 23S rRNA. The L1 stalk is quite mobile in the ribosome, and is involved in E site tRNA release. Functionally, protein L1 is also a translational repressor protein, it controls the translation of the L11 operon by binding to its mRNA. The polypeptide is Large ribosomal subunit protein uL1 (Listeria innocua serovar 6a (strain ATCC BAA-680 / CLIP 11262)).